The sequence spans 394 residues: Na(+)/H(+) antiporter NhaA (394 aa).

The next 11 helical transmembrane spans lie at 17 to 37 (ILLM…LAGV), 59 to 79 (LLLW…GLEV), 95 to 115 (SLPS…YLAF), 124 to 144 (VGWA…MALL), 154 to 174 (VFLL…IALF), 177 to 197 (TDLS…MVAL), 213 to 233 (FILW…GVII), 261 to 281 (FMIL…NMTL), 287 to 307 (PITL…VLLF), 328 to 348 (IIPV…IASL), and 363 to 383 (LGIL…LAKV).

The protein belongs to the NhaA Na(+)/H(+) (TC 2.A.33) antiporter family.

It localises to the cell inner membrane. It carries out the reaction Na(+)(in) + 2 H(+)(out) = Na(+)(out) + 2 H(+)(in). Its function is as follows. Na(+)/H(+) antiporter that extrudes sodium in exchange for external protons. This is Na(+)/H(+) antiporter NhaA from Shewanella frigidimarina (strain NCIMB 400).